Here is a 1379-residue protein sequence, read N- to C-terminus: DNA-directed RNA polymerase subunit beta (1379 aa).

Belongs to the RNA polymerase beta chain family. In terms of assembly, the RNAP catalytic core consists of 2 alpha, 1 beta, 1 beta' and 1 omega subunit. When a sigma factor is associated with the core the holoenzyme is formed, which can initiate transcription.

It carries out the reaction RNA(n) + a ribonucleoside 5'-triphosphate = RNA(n+1) + diphosphate. Functionally, DNA-dependent RNA polymerase catalyzes the transcription of DNA into RNA using the four ribonucleoside triphosphates as substrates. In Ruegeria sp. (strain TM1040) (Silicibacter sp.), this protein is DNA-directed RNA polymerase subunit beta.